The chain runs to 308 residues: D-alanine--D-alanine ligase (308 aa).

The 201-residue stretch at Lys-102 to Glu-302 folds into the ATP-grasp domain. Pro-128–Thr-183 lines the ATP pocket. Mg(2+) contacts are provided by Asp-252, Glu-269, and Asn-271.

This sequence belongs to the D-alanine--D-alanine ligase family. Requires Mg(2+) as cofactor. Mn(2+) serves as cofactor.

It is found in the cytoplasm. It catalyses the reaction 2 D-alanine + ATP = D-alanyl-D-alanine + ADP + phosphate + H(+). The protein operates within cell wall biogenesis; peptidoglycan biosynthesis. Functionally, cell wall formation. The protein is D-alanine--D-alanine ligase of Rhizobium meliloti (strain 1021) (Ensifer meliloti).